A 538-amino-acid polypeptide reads, in one-letter code: MSQHYQHDVLVIGSGAAGLSLALTLPEHLRIAVLSKGELSQGSTYWAQGGVAAVLDDTDTVESHVEDTLVAGGGLCREDAVRFTVEHSREAIQWLIEQGVPFTRDEQHNHEEGSFEYHLTREGGHSHRRIIHAADATGAAIFNTLLAQARRRPNIELLSQRVAVDLITERKLGLPSKRCLGAYVLNRESGEVDTFRARFSVLASGGASKVYLYTSNPDGNSGDGIAMAWRAGCRVGNLEFNQFHPTCLYHPQAKSFLITEALRGEGALLRLPNGERFMPRFDPRGELAPRDIVARAIDHEMKRLGIDCVYLDISHKPAEFIKAHFPTVYERCLDFGIDITQQPIPVVPAAHYTCGGVLVDQHGHTDVPGLYAIGETTFTGLHGANRMASNSLLECFVYARSAAADMLQRLPGTPVPESLPSWDASQVTDSDEDVIIAHNWDELRRFMWDYVGIVRTNKRLQRAQHRVRLLLSEIDEFYSNYKVSRDLIELRNLALVAELIIRSAMQRRESRGLHYTLDYPDLLPEARDTILVPPIYGD.

FAD is bound by residues 14-17 (SGAA), lysine 36, 43-50 (STYWAQGG), and aspartate 223. The Proton donor/acceptor role is filled by arginine 290. Residues glutamate 375 and 391–392 (SL) each bind FAD.

It belongs to the FAD-dependent oxidoreductase 2 family. NadB subfamily. It depends on FAD as a cofactor.

The protein localises to the cytoplasm. It carries out the reaction L-aspartate + O2 = iminosuccinate + H2O2. Its pathway is cofactor biosynthesis; NAD(+) biosynthesis; iminoaspartate from L-aspartate (oxidase route): step 1/1. Its function is as follows. Catalyzes the oxidation of L-aspartate to iminoaspartate, the first step in the de novo biosynthesis of NAD(+). In Pseudomonas aeruginosa (strain ATCC 15692 / DSM 22644 / CIP 104116 / JCM 14847 / LMG 12228 / 1C / PRS 101 / PAO1), this protein is L-aspartate oxidase (nadB).